A 549-amino-acid chain; its full sequence is Glucose-6-phosphate isomerase (549 aa).

Lys-80, Lys-228, and Lys-234 each carry N6-acetyllysine. Residue Glu-355 is the Proton donor of the active site. Residues His-386 and Lys-514 contribute to the active site.

This sequence belongs to the GPI family.

Its subcellular location is the cytoplasm. The enzyme catalyses alpha-D-glucose 6-phosphate = beta-D-fructose 6-phosphate. Its pathway is carbohydrate biosynthesis; gluconeogenesis. It participates in carbohydrate degradation; glycolysis; D-glyceraldehyde 3-phosphate and glycerone phosphate from D-glucose: step 2/4. Catalyzes the reversible isomerization of glucose-6-phosphate to fructose-6-phosphate. This is Glucose-6-phosphate isomerase from Shigella flexneri serotype 5b (strain 8401).